We begin with the raw amino-acid sequence, 512 residues long: cAMP-dependent protein kinase catalytic subunit (512 aa).

Residues 1-15 (MDTTAVASKGSTNVG) show a composition bias toward polar residues. Disordered stretches follow at residues 1-79 (MDTT…SSLW) and 118-166 (IDNL…GLRD). Residues 16–27 (SSTDTLSTSASL) are compositionally biased toward low complexity. Polar residues-rich tracts occupy residues 32–52 (NAGSVNEYSEQQRHGTNSFNG) and 62–79 (SDASVSNGHNNHNESSLW). The span at 143-166 (SRDGRGELGSEHGERRSAMDGLRD) shows a compositional bias: basic and acidic residues. A Protein kinase domain is found at 201–456 (FNFLQTLGTG…SMDIIMHPWF (256 aa)). Residues 207–215 (LGTGSFGRV) and Lys230 contribute to the ATP site. Catalysis depends on Asp324, which acts as the Proton acceptor. Thr356 carries the phosphothreonine modification. The 56-residue stretch at 457–512 (RDISWDKILTRKIEVPYVPPIQAGMGDSSQFDAYADVATDYGTSEDPEFTSIFKDF) folds into the AGC-kinase C-terminal domain.

Belongs to the protein kinase superfamily. AGC Ser/Thr protein kinase family. cAMP subfamily.

The enzyme catalyses L-seryl-[protein] + ATP = O-phospho-L-seryl-[protein] + ADP + H(+). It carries out the reaction L-threonyl-[protein] + ATP = O-phospho-L-threonyl-[protein] + ADP + H(+). Its activity is regulated as follows. Activated by cAMP. The chain is cAMP-dependent protein kinase catalytic subunit (pka1) from Schizosaccharomyces pombe (strain 972 / ATCC 24843) (Fission yeast).